The sequence spans 296 residues: Ribosomal protein L11 methyltransferase (296 aa).

S-adenosyl-L-methionine-binding residues include threonine 139, glycine 163, aspartate 185, and asparagine 232.

Belongs to the methyltransferase superfamily. PrmA family.

The protein localises to the cytoplasm. The enzyme catalyses L-lysyl-[protein] + 3 S-adenosyl-L-methionine = N(6),N(6),N(6)-trimethyl-L-lysyl-[protein] + 3 S-adenosyl-L-homocysteine + 3 H(+). Methylates ribosomal protein L11. The sequence is that of Ribosomal protein L11 methyltransferase from Picosynechococcus sp. (strain ATCC 27264 / PCC 7002 / PR-6) (Agmenellum quadruplicatum).